The sequence spans 278 residues: Deoxyribonuclease-1-like 2 (278 aa).

An N-terminal signal peptide occupies residues 1 to 21; the sequence is MGWPWAPLTAVWALGVMGATA. Active-site residues include glutamate 99 and histidine 150. A disulfide bond links cysteine 189 and cysteine 225.

The protein belongs to the DNase I family. It depends on Mg(2+) as a cofactor. Ca(2+) serves as cofactor.

It localises to the cytoplasm. The protein localises to the secreted. In terms of biological role, divalent cation-dependent acid DNA endonuclease involved in the breakdown of the nucleus during corneocyte formation of epidermal keratinocytes. May play an immune role by eliminating harmful DNA released into the extracellular environment by damaged epidermal cells. The sequence is that of Deoxyribonuclease-1-like 2 (Dnase1l2) from Mus musculus (Mouse).